A 131-amino-acid polypeptide reads, in one-letter code: MLYPALLCAALLLIAPLGHTEGRTLHPSPDAIQFVEQFLDRYNDLTLDDLENLVSSQPEEPSSAFTSGVKVAEYPKWADIPAQGDSTWLRLLKGTLANQKRAVMDRSRRGWNRGCFGLKLDRIGSMSGLGC.

An N-terminal signal peptide occupies residues M1–G22. The propeptide occupies R23–R109. A disulfide bridge links C115 with C131.

It belongs to the natriuretic peptide family. Expressed in brain and to a low extent in atrium.

Its subcellular location is the secreted. Its function is as follows. Exhibits natriuretic and vasodepressant activity. Has a cGMP-stimulating activity. This chain is C-type natriuretic peptide 1, found in Oncorhynchus mykiss (Rainbow trout).